The sequence spans 368 residues: C-glycoside deglycosidase alpha subunit (368 aa).

Residue Glu145 participates in a divalent metal cation binding. The active-site Proton acceptor is His147. Asp177, His275, and Glu311 together coordinate a divalent metal cation.

Belongs to the C-glycoside deglycosidase alpha subunit family. As to quaternary structure, heterodimer composed of an alpha subunit (CarB) and a beta subunit (CarC). A divalent metal cation is required as a cofactor.

The catalysed reaction is 3''-dehydroisovitexin = 1,5-anhydro-D-erythro-hex-1-en-3-ulose + apigenin. The enzyme catalyses 3''-dehydroisoorientin = 1,5-anhydro-D-erythro-hex-1-en-3-ulose + luteolin. In terms of biological role, carbon-carbon bond-cleaving enzyme which participates in the metabolism of C-glycosides. Acts on the C6-glycosylated compounds 3''-dehydroisovitexin (3''-oxo-isovitexin) and 3''-dehydroisoorientin (3''-oxo-homoorientin). Shows weak activity with 3'-dehydromangiferin (3'-oxo-mangiferin). The polypeptide is C-glycoside deglycosidase alpha subunit (Microbacterium trichothecenolyticum (Aureobacterium trichothecenolyticum)).